A 464-amino-acid polypeptide reads, in one-letter code: ERO1-like protein alpha (464 aa).

The signal sequence occupies residues 1 to 23 (MGRAWGLLVGLLGVVWLLRLGHG). 8 disulfide bridges follow: C35/C48, C37/C46, C85/C387, C94/C99, C94/C130, C99/C104, C207/C237, and C390/C393. 3 positions are modified to phosphoserine: S106, S142, and S144. Positions 186, 188, and 199 each coordinate FAD. FAD contacts are provided by S248 and H251. Residue N276 is glycosylated (N-linked (GlcNAc...) asparagine). Residues R283 and R296 each contribute to the FAD site. N-linked (GlcNAc...) asparagine glycosylation occurs at N380.

The protein belongs to the EROs family. In terms of assembly, predominantly monomer. May function both as a monomer and a homodimer. Interacts with PDILT. Interacts with ERP44; the interaction results in retention of ERO1A in the endoplasmic reticulum. FAD serves as cofactor. In terms of processing, N-glycosylated. Post-translationally, the Cys-94/Cys-99 and Cys-390/Cys-393 disulfide bonds constitute the redox-active center. The Cys-94/Cys-99 disulfide bond may accept electron from P4HB and funnel them to the active site disulfide Cys-390/Cys-393. The regulatory Cys-99/Cys-104 disulfide bond stabilizes the other regulatory bond Cys-94/Cys-130. Phosphorylated on Ser-144 by FAM20C in the Golgi which increases its enzymatic activity. Phosphorylation is induced by lactation. It is also induced by hypoxia and reductive stress. As to expression, widely expressed (at protein level). In the mammary gland, expressed at higher levels in lactating mice than in virgin mice (at protein level).

Its subcellular location is the endoplasmic reticulum membrane. The protein resides in the golgi apparatus lumen. The protein localises to the secreted. It is found in the cell projection. It localises to the dendrite. Enzyme activity is tightly regulated to prevent the accumulation of reactive oxygen species in the endoplasmic reticulum. Reversibly down-regulated by the formation of disulfide bonds between the active site Cys-94 and Cys-130, and between Cys-99 and Cys-104. Glutathione may be required to regulate its activity in the endoplasmic reticulum. Functionally, oxidoreductase involved in disulfide bond formation in the endoplasmic reticulum. Efficiently reoxidizes P4HB/PDI, the enzyme catalyzing protein disulfide formation, in order to allow P4HB to sustain additional rounds of disulfide formation. Following P4HB reoxidation, passes its electrons to molecular oxygen via FAD, leading to the production of reactive oxygen species (ROS) in the cell. Required for the proper folding of immunoglobulins. Plays an important role in ER stress-induced, CHOP-dependent apoptosis by activating the inositol 1,4,5-trisphosphate receptor IP3R1. The polypeptide is ERO1-like protein alpha (Mus musculus (Mouse)).